A 146-amino-acid polypeptide reads, in one-letter code: Transcriptional regulator MraZ (146 aa).

2 SpoVT-AbrB domains span residues 7-54 and 83-126; these read HVTN…GPEL and GVYV…DPQA.

This sequence belongs to the MraZ family. Forms oligomers.

Its subcellular location is the cytoplasm. It is found in the nucleoid. This Rhizobium meliloti (strain 1021) (Ensifer meliloti) protein is Transcriptional regulator MraZ.